The sequence spans 140 residues: 3-hydroxyacyl-[acyl-carrier-protein] dehydratase FabZ (140 aa).

Residue H48 is part of the active site.

This sequence belongs to the thioester dehydratase family. FabZ subfamily.

Its subcellular location is the cytoplasm. The catalysed reaction is a (3R)-hydroxyacyl-[ACP] = a (2E)-enoyl-[ACP] + H2O. Involved in unsaturated fatty acids biosynthesis. Catalyzes the dehydration of short chain beta-hydroxyacyl-ACPs and long chain saturated and unsaturated beta-hydroxyacyl-ACPs. This Oceanobacillus iheyensis (strain DSM 14371 / CIP 107618 / JCM 11309 / KCTC 3954 / HTE831) protein is 3-hydroxyacyl-[acyl-carrier-protein] dehydratase FabZ.